Here is a 600-residue protein sequence, read N- to C-terminus: NADH-quinone oxidoreductase subunit C/D (600 aa).

The NADH dehydrogenase I subunit C stretch occupies residues Met1–Gln190. Residues Asp214 to Arg600 form an NADH dehydrogenase I subunit D region.

In the N-terminal section; belongs to the complex I 30 kDa subunit family. This sequence in the C-terminal section; belongs to the complex I 49 kDa subunit family. NDH-1 is composed of 13 different subunits. Subunits NuoB, CD, E, F, and G constitute the peripheral sector of the complex.

It is found in the cell inner membrane. It carries out the reaction a quinone + NADH + 5 H(+)(in) = a quinol + NAD(+) + 4 H(+)(out). Its function is as follows. NDH-1 shuttles electrons from NADH, via FMN and iron-sulfur (Fe-S) centers, to quinones in the respiratory chain. The immediate electron acceptor for the enzyme in this species is believed to be ubiquinone. Couples the redox reaction to proton translocation (for every two electrons transferred, four hydrogen ions are translocated across the cytoplasmic membrane), and thus conserves the redox energy in a proton gradient. This chain is NADH-quinone oxidoreductase subunit C/D, found in Citrobacter koseri (strain ATCC BAA-895 / CDC 4225-83 / SGSC4696).